We begin with the raw amino-acid sequence, 540 residues long: Cystathionine gamma-synthase 1, chloroplastic (540 aa).

The N-terminal 78 residues, 1–78 (MAVSSCARAF…RNCSNIGVAQ (78 aa)), are a transit peptide targeting the chloroplast. Pyridoxal 5'-phosphate contacts are provided by tyrosine 203, arginine 205, glycine 233, methionine 234, tyrosine 258, serine 353, and threonine 355. The residue at position 356 (lysine 356) is an N6-(pyridoxal phosphate)lysine.

It belongs to the trans-sulfuration enzymes family. As to quaternary structure, forms homotetramers composed of 2 homodimers. Pyridoxal 5'-phosphate serves as cofactor.

Its subcellular location is the plastid. It localises to the chloroplast. It catalyses the reaction O-phospho-L-homoserine + L-cysteine = L,L-cystathionine + phosphate. The catalysed reaction is O-succinyl-L-homoserine + L-cysteine = L,L-cystathionine + succinate + H(+). It participates in amino-acid biosynthesis; L-methionine biosynthesis via de novo pathway; L-cystathionine from O-succinyl-L-homoserine: step 1/1. Its activity is regulated as follows. Irreversibly inactivated by DL-propargylglycine. Its function is as follows. Catalyzes the first committed step of methionine (Met) biosynthesis. Catalyzes the formation of L-cystathionine from homoserine esters and L-cysteine, via a gamma-replacement reaction. The protein is Cystathionine gamma-synthase 1, chloroplastic of Nicotiana tabacum (Common tobacco).